The following is a 248-amino-acid chain: Transcription factor MYBC1 (248 aa).

Positions 102–161 (TLKRPRLVWTPQLHKRFVDAVGHLGIKNAVPKTIMQLMSVEGLTRENVASHLQKYRLYLR) form a DNA-binding region, myb-like GARP.

As to expression, expressed in roots, leaves, stems, petioles, filaments, stigma, pedicels, sepals, anthers, petals, and siliques.

The protein localises to the nucleus. Functionally, probable transcription factor that acts as a negative regulator of freezing tolerance via a CBF-independent pathway. This Arabidopsis thaliana (Mouse-ear cress) protein is Transcription factor MYBC1.